A 198-amino-acid chain; its full sequence is Heat shock 70 kDa protein (198 aa).

Over residues 170 to 191 the composition is skewed to gly residues; sequence GGGVPSGMPGGMPGAGGGGGKG. The interval 170–198 is disordered; it reads GGGVPSGMPGGMPGAGGGGGKGPTIEEVD.

The protein belongs to the heat shock protein 70 family.

The chain is Heat shock 70 kDa protein from Schistosoma japonicum (Blood fluke).